The sequence spans 758 residues: Actin filament-associated protein 1-like 1 (758 aa).

The segment at Tyr-91–Glu-194 is disordered. Positions Leu-102–Glu-120 are enriched in pro residues. Residues Tyr-137 to Asn-148 are compositionally biased toward polar residues. The span at Glu-177–Glu-186 shows a compositional bias: low complexity. One can recognise a PH 1 domain in the interval Asp-216 to Ser-312. A disordered region spans residues Ser-335–Gly-369. Residues Ser-342–Gly-356 are compositionally biased toward polar residues. One can recognise a PH 2 domain in the interval Glu-409 to Gly-503. Positions Lys-602–Ser-690 form a coiled coil. A disordered region spans residues Ala-692–Pro-758. A compositionally biased stretch (basic and acidic residues) spans Lys-749–Pro-758.

Its subcellular location is the cytoplasm. It localises to the cell projection. The protein localises to the podosome. The protein resides in the invadopodium. It is found in the cytoskeleton. Its subcellular location is the stress fiber. Functionally, may be involved in podosome and invadosome formation. This chain is Actin filament-associated protein 1-like 1 (afap1l1), found in Xenopus tropicalis (Western clawed frog).